The chain runs to 154 residues: Ribonuclease H (154 aa).

An RNase H type-1 domain is found at 1–142 (MRKQVEIFTD…CDELARAAAS (142 aa)). Positions 10, 48, 70, and 134 each coordinate Mg(2+).

It belongs to the RNase H family. As to quaternary structure, monomer. Requires Mg(2+) as cofactor.

It localises to the cytoplasm. It catalyses the reaction Endonucleolytic cleavage to 5'-phosphomonoester.. Endonuclease that specifically degrades the RNA of RNA-DNA hybrids. In Pectobacterium atrosepticum (strain SCRI 1043 / ATCC BAA-672) (Erwinia carotovora subsp. atroseptica), this protein is Ribonuclease H.